The primary structure comprises 218 residues: Cytochrome b6 (218 aa).

A helical membrane pass occupies residues 35 to 55; the sequence is IFYCLGGITLVCFLVQFATGF. C38 serves as a coordination point for heme c. Heme b contacts are provided by H89 and H103. The next 3 membrane-spanning stretches (helical) occupy residues 93–113, 119–139, and 189–209; these read ASMM…TGGF, LTWV…VTGY, and LHTF…FLMI. Residues H190 and H205 each contribute to the heme b site.

It belongs to the cytochrome b family. PetB subfamily. As to quaternary structure, the 4 large subunits of the cytochrome b6-f complex are cytochrome b6, subunit IV (17 kDa polypeptide, PetD), cytochrome f and the Rieske protein, while the 4 small subunits are PetG, PetL, PetM and PetN. The complex functions as a dimer. The cofactor is heme b. Heme c serves as cofactor.

It is found in the cellular thylakoid membrane. Functionally, component of the cytochrome b6-f complex, which mediates electron transfer between photosystem II (PSII) and photosystem I (PSI), cyclic electron flow around PSI, and state transitions. The polypeptide is Cytochrome b6 (Prochlorococcus marinus (strain MIT 9303)).